Here is a 183-residue protein sequence, read N- to C-terminus: Outer membrane protein H.8 (183 aa).

An N-terminal signal peptide occupies residues 1–17; sequence MKAYLALISAAVIGLAA. A lipid anchor (N-palmitoyl cysteine) is attached at Cys18. The S-diacylglycerol cysteine moiety is linked to residue Cys18. Positions 27 to 51 are disordered; sequence AEATPAAEAPASEAPAAEAAPADAA. One can recognise a Plastocyanin-like domain in the interval 57–183; it reads GNCAATVESN…LMNGKVTLVD (127 aa). The Cu cation site is built by His102, Cys166, His171, and Met175.

Cu cation is required as a cofactor.

It is found in the cell outer membrane. In Neisseria meningitidis serogroup B (strain ATCC BAA-335 / MC58), this protein is Outer membrane protein H.8.